A 464-amino-acid polypeptide reads, in one-letter code: Plant intracellular Ras-group-related LRR protein 3 (464 aa).

Positions 106-138 (AAVVSLEEVHEGYEKQLRDLEEEIGRVYASAVE) form a coiled coil. LRR repeat units follow at residues 160-183 (GGVV…LGKI), 184-206 (VGLV…ISGL), 207-230 (EKLE…GLLL), 232-252 (LRIL…IAQC), 254-275 (SLVE…FGYG), 276-299 (LLNL…ICEM), 301-322 (SLRY…IGRL), 323-347 (TNLE…ISDL), 348-370 (ANLR…FFRL), and 372-393 (KLEK…MVNQ). Positions 398-406 (VREFMRKRW) match the GVYW; degenerate motif.

The protein belongs to the SHOC2 family. Widely expressed.

Functionally, leucine-rich repeat protein that likely mediates protein interactions, possibly in the context of signal transduction. The protein is Plant intracellular Ras-group-related LRR protein 3 (PIRL3) of Arabidopsis thaliana (Mouse-ear cress).